A 395-amino-acid chain; its full sequence is Probable protein arginine N-methyltransferase 6.2 (395 aa).

The span at 1-11 shows a compositional bias: gly residues; sequence MFAGGADGGNG. The segment at 1–37 is disordered; that stretch reads MFAGGADGGNGHLPRPRRARRGGGGGGGMGSPPLGPP. One can recognise an SAM-dependent MTase PRMT-type domain in the interval 45–390; it reads DMAYFKAYSH…YFTRDQWYVK (346 aa). S-adenosyl-L-methionine-binding residues include His58, Arg67, Gly91, Asp113, and Glu142. Active-site residues include Glu156 and Glu165. Positions 300–324 are disordered; the sequence is KKQANQCLDGNTQDASPSNKKKKAD. Positions 302–317 are enriched in polar residues; it reads QANQCLDGNTQDASPS.

Belongs to the class I-like SAM-binding methyltransferase superfamily. Protein arginine N-methyltransferase family. PRMT6 subfamily.

In terms of biological role, arginine methyltransferase that can both catalyze the formation of omega-N monomethylarginine (MMA) and asymmetrical dimethylarginine (aDMA). This chain is Probable protein arginine N-methyltransferase 6.2 (PRMT6.2), found in Oryza sativa subsp. indica (Rice).